Consider the following 830-residue polypeptide: DNA helicase MCM8 (830 aa).

The MCM domain maps to 392 to 599; sequence LLKLIVNSLC…QHDHLLSEHV (208 aa). 444–451 serves as a coordination point for ATP; the sequence is GDPGLGKS. Serine 620 is modified (phosphoserine).

The protein belongs to the MCM family. Component of the MCM8-MCM9 complex, which forms a hexamer composed of MCM8 and MCM9. Interacts with the DNA mismatch repair (MMR) complex composed at least of MSH2, MSH3, MSH6, PMS1 and MLH1. Interacts with RAD51; the interaction recruits RAD51 to DNA damage sites. Interacts with the MRN complex composed of MRE11, RAD50 and NBN/NBS1. Interacts with CDC6 and ORC2. Interacts with HROB; the interaction recruits the MCM8-MCM9 complex to DNA damage sites.

It is found in the nucleus. It localises to the chromosome. It catalyses the reaction ATP + H2O = ADP + phosphate + H(+). Its function is as follows. Component of the MCM8-MCM9 complex, a complex involved in the repair of double-stranded DNA breaks (DBSs) and DNA interstrand cross-links (ICLs) by homologous recombination (HR). Required for DNA resection by the MRE11-RAD50-NBN/NBS1 (MRN) complex by recruiting the MRN complex to the repair site and by promoting the complex nuclease activity. Probably by regulating the localization of the MNR complex, indirectly regulates the recruitment of downstream effector RAD51 to DNA damage sites including DBSs and ICLs. The MCM8-MCM9 complex is dispensable for DNA replication and S phase progression. However, may play a non-essential for DNA replication: may be involved in the activation of the prereplicative complex (pre-RC) during G(1) phase by recruiting CDC6 to the origin recognition complex (ORC). Probably by regulating HR, plays a key role during gametogenesis. Stabilizes MCM9 protein. This Rattus norvegicus (Rat) protein is DNA helicase MCM8 (Mcm8).